A 354-amino-acid polypeptide reads, in one-letter code: Methylthioribose-1-phosphate isomerase (354 aa).

Residues 58–60, Arg101, and Gln204 each bind substrate; that span reads RGA. Asp245 functions as the Proton donor in the catalytic mechanism. 255 to 256 contributes to the substrate binding site; the sequence is NK.

This sequence belongs to the eIF-2B alpha/beta/delta subunits family. MtnA subfamily.

It catalyses the reaction 5-(methylsulfanyl)-alpha-D-ribose 1-phosphate = 5-(methylsulfanyl)-D-ribulose 1-phosphate. The protein operates within amino-acid biosynthesis; L-methionine biosynthesis via salvage pathway; L-methionine from S-methyl-5-thio-alpha-D-ribose 1-phosphate: step 1/6. Catalyzes the interconversion of methylthioribose-1-phosphate (MTR-1-P) into methylthioribulose-1-phosphate (MTRu-1-P). The sequence is that of Methylthioribose-1-phosphate isomerase from Xylella fastidiosa (strain 9a5c).